The following is a 183-amino-acid chain: PLAT domain-containing protein 2 (183 aa).

The N-terminal stretch at 1–25 is a signal peptide; it reads MMPRRDVLFLSLLLVIATVSAVALA. Residues 31 to 158 form the PLAT domain; that stretch reads CVYTFFLRTG…SPYELSAVRN (128 aa).

It localises to the endoplasmic reticulum. Involved in response to abiotic stress. In Arabidopsis thaliana (Mouse-ear cress), this protein is PLAT domain-containing protein 2.